The primary structure comprises 249 residues: MGNIVLQLLAILALCIAPARSGWLQGTATFYGGADGSGTMGGACGYGNLYDQGYGINNAALSTPLFNNGASCGQCYLIICNYDKAPSGCRMGTAITVTGTNFCPPNYDLPYGGWCNTTRPHFDMSQPAWENIGIYSAGIVPILYQQVKCWRSGGVRFTITGLNYFELVLVTNMAGSGSIASMSVKGSSTGWIQMSRNWGANWQCLAGLAGQALSFTVTSTGGQTIVFDSVVPAGWSFGQTFSTYQQFDY.

The N-terminal stretch at 1 to 21 (MGNIVLQLLAILALCIAPARS) is a signal peptide. An Expansin-like EG45 domain is found at 41 to 154 (GGACGYGNLY…QQVKCWRSGG (114 aa)). An N-linked (GlcNAc...) asparagine glycan is attached at N116. The 80-residue stretch at 164–243 (YFELVLVTNM…GWSFGQTFST (80 aa)) folds into the Expansin-like CBD domain.

This sequence belongs to the expansin family. Expansin A subfamily. As to expression, expressed in roots.

The protein localises to the secreted. It localises to the cell wall. The protein resides in the membrane. In terms of biological role, may cause loosening and extension of plant cell walls by disrupting non-covalent bonding between cellulose microfibrils and matrix glucans. No enzymatic activity has been found. May be required for rapid internodal elongation in deepwater rice during submergence. This is Expansin-A18 (EXPA18) from Oryza sativa subsp. japonica (Rice).